Here is a 331-residue protein sequence, read N- to C-terminus: uncharacterized protein (331 aa).

The protein belongs to the proline racemase family.

This is an uncharacterized protein from Bacillus anthracis.